Here is a 428-residue protein sequence, read N- to C-terminus: UDP-N-acetylglucosamine 1-carboxyvinyltransferase (428 aa).

Residue 25–26 (KN) participates in phosphoenolpyruvate binding. Arg102 contributes to the UDP-N-acetyl-alpha-D-glucosamine binding site. Cys126 functions as the Proton donor in the catalytic mechanism. The residue at position 126 (Cys126) is a 2-(S-cysteinyl)pyruvic acid O-phosphothioketal. UDP-N-acetyl-alpha-D-glucosamine is bound by residues Asp316 and Val338.

It belongs to the EPSP synthase family. MurA subfamily.

It localises to the cytoplasm. It catalyses the reaction phosphoenolpyruvate + UDP-N-acetyl-alpha-D-glucosamine = UDP-N-acetyl-3-O-(1-carboxyvinyl)-alpha-D-glucosamine + phosphate. Its pathway is cell wall biogenesis; peptidoglycan biosynthesis. Its function is as follows. Cell wall formation. Adds enolpyruvyl to UDP-N-acetylglucosamine. The sequence is that of UDP-N-acetylglucosamine 1-carboxyvinyltransferase from Anaplasma marginale (strain Florida).